We begin with the raw amino-acid sequence, 298 residues long: MLYQQISQNKQRTVVLLVVFFALLALIGASAGYLLLDNYAMGLVLALVIGVIYATSMIFQSTSLVMSMNNAREVTEKEAPGFFHIVEDMAMVAQIPMPRVFIIEDPSLNAFATGSSPQNAAVAATTGLLEVMNREELEGVIGHEISHIRNYDIRISTIAVALASAVTVISSIGGRMLWYGGGSRRQRDDGDDDVLRIITLLLSLLSLLLAPLVASLIQLAISRQREYLADASSVELTRNPQGMINALEKLQLSQPMKHPVDDASAALYINEPRKKRSFSSLFSTHPPIEERIERLKNM.

Transmembrane regions (helical) follow at residues 14–34 (VVLL…AGYL) and 39–59 (YAMG…SMIF). His143 contributes to the Zn(2+) binding site. The active site involves Glu144. His147 contacts Zn(2+). The next 2 membrane-spanning stretches (helical) occupy residues 158–178 (IAVA…RMLW) and 197–217 (IITL…ASLI). Residue Glu226 coordinates Zn(2+).

The protein belongs to the peptidase M48B family. Requires Zn(2+) as cofactor.

The protein resides in the cell membrane. The sequence is that of Protease HtpX homolog from Streptococcus pyogenes serotype M28 (strain MGAS6180).